Consider the following 130-residue polypeptide: Small ribosomal subunit protein uS9 (130 aa).

Belongs to the universal ribosomal protein uS9 family.

The sequence is that of Small ribosomal subunit protein uS9 from Aliivibrio salmonicida (strain LFI1238) (Vibrio salmonicida (strain LFI1238)).